The following is a 300-amino-acid chain: F-box associated domain-containing protein sdz-33 (300 aa).

One can recognise an F-box domain in the interval Pro-5–Cys-51.

In terms of tissue distribution, expressed in D-type motor neuron cell bodies.

Functionally, substrate recognition component of E3 ubiquitin-protein ligase complex which mediates the ubiquitination and subsequent proteasomal degradation of target proteins such as mdl-1. Positively regulates axon regeneration by targeting mdl-1 for ubiquitin-mediated degradation; probably thereby reducing levels of mdl-1-mxl-1 heterodimers, allowing free mxl-1 to form complexes with tdpt-1 and thus inhibiting tdpt-1-dependent sumoylation of ets-4. The protein is F-box associated domain-containing protein sdz-33 of Caenorhabditis elegans.